Consider the following 39-residue polypeptide: Photosystem II reaction center protein J (39 aa).

A helical transmembrane segment spans residues 7 to 27; that stretch reads IPLWIVAVVAGMGVIAVVGIF.

Belongs to the PsbJ family. In terms of assembly, PSII is composed of 1 copy each of membrane proteins PsbA, PsbB, PsbC, PsbD, PsbE, PsbF, PsbH, PsbI, PsbJ, PsbK, PsbL, PsbM, PsbT, PsbX, PsbY, PsbZ, Psb30/Ycf12, peripheral proteins PsbO, CyanoQ (PsbQ), PsbU, PsbV and a large number of cofactors. It forms dimeric complexes.

The protein resides in the cellular thylakoid membrane. This protein is a component of the reaction center of photosystem II. In terms of biological role, one of the components of the core complex of photosystem II (PSII). PSII is a light-driven water:plastoquinone oxidoreductase that uses light energy to abstract electrons from H(2)O, generating O(2) and a proton gradient subsequently used for ATP formation. It consists of a core antenna complex that captures photons, and an electron transfer chain that converts photonic excitation into a charge separation. In Picosynechococcus sp. (strain ATCC 27264 / PCC 7002 / PR-6) (Agmenellum quadruplicatum), this protein is Photosystem II reaction center protein J.